The sequence spans 122 residues: Large ribosomal subunit protein uL14c (122 aa).

It belongs to the universal ribosomal protein uL14 family. In terms of assembly, part of the 50S ribosomal subunit.

It localises to the plastid. Its subcellular location is the chloroplast. In terms of biological role, binds to 23S rRNA. The sequence is that of Large ribosomal subunit protein uL14c from Vitis vinifera (Grape).